The chain runs to 328 residues: D-cysteine desulfhydrase (328 aa).

Lys-51 carries the post-translational modification N6-(pyridoxal phosphate)lysine.

Belongs to the ACC deaminase/D-cysteine desulfhydrase family. In terms of assembly, homodimer. Requires pyridoxal 5'-phosphate as cofactor.

The catalysed reaction is D-cysteine + H2O = hydrogen sulfide + pyruvate + NH4(+) + H(+). Its function is as follows. Catalyzes the alpha,beta-elimination reaction of D-cysteine and of several D-cysteine derivatives. It could be a defense mechanism against D-cysteine. The chain is D-cysteine desulfhydrase from Shigella sonnei (strain Ss046).